We begin with the raw amino-acid sequence, 901 residues long: Cyanophycin synthetase (901 aa).

Positions 224–478 (KRILAASGVP…VAGAVMDMLF (255 aa)) constitute an ATP-grasp domain. 493–499 (GTNGKTT) contributes to the ATP binding site.

The protein in the C-terminal section; belongs to the MurCDEF family. As to quaternary structure, homodimer.

The enzyme catalyses [L-4-(L-arginin-2-N-yl)aspartate](n) + L-aspartate + ATP = [L-4-(L-arginin-2-N-yl)aspartate](n)-L-aspartate + ADP + phosphate + H(+). It carries out the reaction [L-4-(L-arginin-2-N-yl)aspartate](n)-L-aspartate + L-arginine + ATP = [L-4-(L-arginin-2-N-yl)aspartate](n+1) + ADP + phosphate + H(+). Its function is as follows. Catalyzes the ATP-dependent polymerization of arginine and aspartate to multi-L-arginyl-poly-L-aspartic acid (cyanophycin; a water-insoluble reserve polymer). This is Cyanophycin synthetase (cphA) from Trichormus variabilis (strain ATCC 29413 / PCC 7937) (Anabaena variabilis).